We begin with the raw amino-acid sequence, 1156 residues long: Condensin-2 complex subunit G2 (1156 aa).

Residues 460 to 498 (MLPALKFCLHDNSEKVRVAFVDMLLKIKAVRAAKFWKIC) form an HEAT repeat. The segment at 587–611 (PNEDTEDEDDDEGDGEGIVRGDSEK) is disordered. Positions 589-601 (EDTEDEDDDEGDG) are enriched in acidic residues.

As to quaternary structure, component of the condensin-2 complex, which contains the smc2 and smc4 heterodimer, and three non SMC subunits that probably regulate the complex: ncaph2, ncapd3 and ncapg2.

It is found in the nucleus. Regulatory subunit of the condensin-2 complex, a complex which establishes mitotic chromosome architecture and is involved in physical rigidity of the chromatid axis. The protein is Condensin-2 complex subunit G2 (ncapg2) of Xenopus laevis (African clawed frog).